Here is a 154-residue protein sequence, read N- to C-terminus: Terephthalate 1,2-dioxygenase, terminal oxygenase component subunit beta 2 (154 aa).

Belongs to the bacterial ring-hydroxylating dioxygenase beta subunit family. In terms of assembly, heterotetramer composed of 2 alpha (TphA2I and TphA2II) and 2 beta (TphA3I and TphA3II) subunits. Part of a multicomponent enzyme system composed of a reductase (TphA1I or TphA1II) and a two-subunit oxygenase component (TphA2I or TphA2II and TphA3I or TphA3II). Fe cation serves as cofactor.

It catalyses the reaction terephthalate + NADH + O2 + H(+) = (3S,4R)-3,4-dihydroxycyclohexa-1,5-diene-1,4-dicarboxylate + NAD(+). With respect to regulation, inhibited by EDTA. Its function is as follows. Component of the terephthalate 1,2-dioxygenase multicomponent enzyme system which catalyzes the dioxygenation of terephthalate (TER/TPA) to 1,2-dihydroxy-3,5-cyclohexadiene-1,4-dicarboxylic acid (DCD). It can also use 2,5-dicarboxypyridine (PDC) and 1,4-napthalenedicarboxylic acid (NDC) as substrates, and preferentially uses NADPH which is the physiological electron donor. In Comamonas sp, this protein is Terephthalate 1,2-dioxygenase, terminal oxygenase component subunit beta 2 (tphA3II).